A 141-amino-acid chain; its full sequence is Large ribosomal subunit protein uL11 (141 aa).

It belongs to the universal ribosomal protein uL11 family. In terms of assembly, part of the ribosomal stalk of the 50S ribosomal subunit. Interacts with L10 and the large rRNA to form the base of the stalk. L10 forms an elongated spine to which L12 dimers bind in a sequential fashion forming a multimeric L10(L12)X complex. In terms of processing, one or more lysine residues are methylated.

Forms part of the ribosomal stalk which helps the ribosome interact with GTP-bound translation factors. In Campylobacter concisus (strain 13826), this protein is Large ribosomal subunit protein uL11.